A 145-amino-acid chain; its full sequence is D-aminoacyl-tRNA deacylase (145 aa).

Residues 137–138 (GP) carry the Gly-cisPro motif, important for rejection of L-amino acids motif.

It belongs to the DTD family. Homodimer.

Its subcellular location is the cytoplasm. The enzyme catalyses glycyl-tRNA(Ala) + H2O = tRNA(Ala) + glycine + H(+). It catalyses the reaction a D-aminoacyl-tRNA + H2O = a tRNA + a D-alpha-amino acid + H(+). Its function is as follows. An aminoacyl-tRNA editing enzyme that deacylates mischarged D-aminoacyl-tRNAs. Also deacylates mischarged glycyl-tRNA(Ala), protecting cells against glycine mischarging by AlaRS. Acts via tRNA-based rather than protein-based catalysis; rejects L-amino acids rather than detecting D-amino acids in the active site. By recycling D-aminoacyl-tRNA to D-amino acids and free tRNA molecules, this enzyme counteracts the toxicity associated with the formation of D-aminoacyl-tRNA entities in vivo and helps enforce protein L-homochirality. This is D-aminoacyl-tRNA deacylase from Azotobacter vinelandii (strain DJ / ATCC BAA-1303).